A 183-amino-acid chain; its full sequence is Large ribosomal subunit protein uL6 (183 aa).

The protein belongs to the universal ribosomal protein uL6 family. Part of the 50S ribosomal subunit.

In terms of biological role, this protein binds to the 23S rRNA, and is important in its secondary structure. It is located near the subunit interface in the base of the L7/L12 stalk, and near the tRNA binding site of the peptidyltransferase center. This is Large ribosomal subunit protein uL6 from Chlamydia trachomatis serovar D (strain ATCC VR-885 / DSM 19411 / UW-3/Cx).